Here is a 390-residue protein sequence, read N- to C-terminus: MAPSVKDQVEPQHAKILAIGTANPPNVYYQEDYPDFLFRVTKNEHRTDLREKFDRICEKSRTRKRYLYLTEEILKANPCIYTYGAPSLDVRQDMLNPEVPKLGQEAALKAIKEWGQPISKITHLIFCTASCVDMPGADFQLVKLLGLNPSVTRTMIYEAGCYAGATVLRLAKDFAENNEGARVLVVCAEITTVFFHGLTDTHLDILVGQALFADGASAVIVGANPEPEIESPLFEIVACRQTIIPNSEHGVVANIREMGFNYYLSGEVPKFVGGNVVDFLTKTFEKVDGKNKDWNSLFFSVHPGGPAIVDQVEEQLGLKEGKLRATRHVLSEYGNMGAPSVHFILDEMRKKSIEEGKATTGEGLEWGVVIGIGPGLTVETAVLRSEFITC.

Residue Cys161 is part of the active site.

The protein belongs to the thiolase-like superfamily. Chalcone/stilbene synthases family. Homodimer.

It carries out the reaction 2-hydroxybenzoyl-CoA + malonyl-CoA = 4-hydroxycoumarin + CO2 + 2 CoA. Type III polyketide synthase involved preferentially in the biosynthesis of 4-hydroxycoumarin from salicoyl-CoA. Can also use benzoyl-CoA and malonyl-CoA to produce 3,5-dihydroxybiphenyl as a major product and benzoyldiacetic acid lactone as a minor side product. Can also use m-hydroxybenzoyl-CoA as substrate, producing m-hydroxybenzoyl diacetic acid lactone as a derailment product. No activity with p-hydroxybenzoyl-CoA, CoA-linked cinnamic acids or acetyl-CoA. The chain is 4-hydroxycoumarin synthase 1 (BIS2) from Sorbus aucuparia (European mountain ash).